The primary structure comprises 506 residues: Ribose import ATP-binding protein RbsA (506 aa).

2 consecutive ABC transporter domains span residues 5-237 (VQLI…VGRP) and 249-492 (PFGA…LAIE). An ATP-binding site is contributed by 37–44 (GENGAGKS).

The protein belongs to the ABC transporter superfamily. Ribose importer (TC 3.A.1.2.1) family. In terms of assembly, the complex is composed of an ATP-binding protein (RbsA), two transmembrane proteins (RbsC) and a solute-binding protein (RbsB).

The protein resides in the cell inner membrane. It carries out the reaction D-ribose(out) + ATP + H2O = D-ribose(in) + ADP + phosphate + H(+). In terms of biological role, part of the ABC transporter complex RbsABC involved in ribose import. Responsible for energy coupling to the transport system. In Chelativorans sp. (strain BNC1), this protein is Ribose import ATP-binding protein RbsA.